A 446-amino-acid chain; its full sequence is tRNA-2-methylthio-N(6)-dimethylallyladenosine synthase (446 aa).

The 117-residue stretch at 3-119 folds into the MTTase N-terminal domain; it reads KKIFIKTFGC…INEAILNHLK (117 aa). [4Fe-4S] cluster is bound by residues cysteine 12, cysteine 48, cysteine 82, cysteine 158, cysteine 162, and cysteine 165. Positions 144-374 constitute a Radical SAM core domain; that stretch reads KDSKVSSFLT…QEKLFNNQIK (231 aa). A TRAM domain is found at 377-439; the sequence is KSLENKILNV…QNSLFGKLTE (63 aa).

It belongs to the methylthiotransferase family. MiaB subfamily. As to quaternary structure, monomer. [4Fe-4S] cluster is required as a cofactor.

It is found in the cytoplasm. The catalysed reaction is N(6)-dimethylallyladenosine(37) in tRNA + (sulfur carrier)-SH + AH2 + 2 S-adenosyl-L-methionine = 2-methylsulfanyl-N(6)-dimethylallyladenosine(37) in tRNA + (sulfur carrier)-H + 5'-deoxyadenosine + L-methionine + A + S-adenosyl-L-homocysteine + 2 H(+). In terms of biological role, catalyzes the methylthiolation of N6-(dimethylallyl)adenosine (i(6)A), leading to the formation of 2-methylthio-N6-(dimethylallyl)adenosine (ms(2)i(6)A) at position 37 in tRNAs that read codons beginning with uridine. This is tRNA-2-methylthio-N(6)-dimethylallyladenosine synthase from Pelagibacter ubique (strain HTCC1062).